The chain runs to 63 residues: uncharacterized protein (63 aa).

Over residues 1-15 (MGRNHIHKNRDKNKQ) the composition is skewed to basic residues. The segment at 1–63 (MGRNHIHKNR…ADNRAKKKSR (63 aa)) is disordered. The span at 30 to 44 (GVYEEYSTELADADD) shows a compositional bias: acidic residues. Positions 45-57 (REAQERAKAADNR) are enriched in basic and acidic residues.

This is an uncharacterized protein from Bacillus subtilis (strain 168).